Consider the following 324-residue polypeptide: S-methyl-5'-thioadenosine phosphorylase (324 aa).

Residues Ser14, 57–58 (RH), and 90–91 (SA) contribute to the phosphate site. Met196 is a substrate binding site. Ser197 serves as a coordination point for phosphate. 220-222 (DYD) provides a ligand contact to substrate.

Belongs to the PNP/MTAP phosphorylase family. MTAP subfamily. As to quaternary structure, homotrimer.

It is found in the cytoplasm. The protein resides in the nucleus. The catalysed reaction is S-methyl-5'-thioadenosine + phosphate = 5-(methylsulfanyl)-alpha-D-ribose 1-phosphate + adenine. The protein operates within amino-acid biosynthesis; L-methionine biosynthesis via salvage pathway; S-methyl-5-thio-alpha-D-ribose 1-phosphate from S-methyl-5'-thioadenosine (phosphorylase route): step 1/1. Functionally, catalyzes the reversible phosphorylation of S-methyl-5'-thioadenosine (MTA) to adenine and 5-methylthioribose-1-phosphate. Involved in the breakdown of MTA, a major by-product of polyamine biosynthesis. Responsible for the first step in the methionine salvage pathway after MTA has been generated from S-adenosylmethionine. Has broad substrate specificity with 6-aminopurine nucleosides as preferred substrates. The sequence is that of S-methyl-5'-thioadenosine phosphorylase from Coprinopsis cinerea (strain Okayama-7 / 130 / ATCC MYA-4618 / FGSC 9003) (Inky cap fungus).